Reading from the N-terminus, the 108-residue chain is Nucleoid-associated protein BAV0915 (108 aa).

It belongs to the YbaB/EbfC family. Homodimer.

It localises to the cytoplasm. The protein localises to the nucleoid. In terms of biological role, binds to DNA and alters its conformation. May be involved in regulation of gene expression, nucleoid organization and DNA protection. In Bordetella avium (strain 197N), this protein is Nucleoid-associated protein BAV0915.